The sequence spans 245 residues: Putative transport permease YvfS (245 aa).

The next 6 membrane-spanning stretches (helical) occupy residues 20–40 (YFVL…TNVV), 53–73 (HYLM…TLGI), 103–123 (IGQS…GAII), 137–157 (GLWI…IGLM), 164–184 (AGIS…WMPF), and 214–234 (GSPT…FMLL). Residues 20 to 242 (YFVLWSLIMP…LLSKYIRRKQ (223 aa)) enclose the ABC transmembrane type-2 domain.

This sequence belongs to the ABC-2 integral membrane protein family.

It localises to the cell membrane. This is Putative transport permease YvfS (yvfS) from Bacillus subtilis (strain 168).